A 428-amino-acid chain; its full sequence is Tyrosine--tRNA ligase (428 aa).

Tyrosine 36 contributes to the L-tyrosine binding site. The short motif at 41-50 is the 'HIGH' region element; that stretch reads PTARSLHIGS. The L-tyrosine site is built by tyrosine 169 and glutamine 173. Residues 229 to 233 carry the 'KMSKS' region motif; that stretch reads KMGKT. An ATP-binding site is contributed by lysine 232. The 67-residue stretch at 361–427 folds into the S4 RNA-binding domain; it reads IPAYEIMHEC…GKKKYMIIKV (67 aa).

The protein belongs to the class-I aminoacyl-tRNA synthetase family. TyrS type 1 subfamily. Homodimer.

The protein resides in the cytoplasm. It carries out the reaction tRNA(Tyr) + L-tyrosine + ATP = L-tyrosyl-tRNA(Tyr) + AMP + diphosphate + H(+). Catalyzes the attachment of tyrosine to tRNA(Tyr) in a two-step reaction: tyrosine is first activated by ATP to form Tyr-AMP and then transferred to the acceptor end of tRNA(Tyr). In Syntrophus aciditrophicus (strain SB), this protein is Tyrosine--tRNA ligase.